The sequence spans 327 residues: Malate dehydrogenase (327 aa).

12-18 (GAAGQIG) is a binding site for NAD(+). 2 residues coordinate substrate: R93 and R99. Residues N106, Q113, and 130-132 (VGN) each bind NAD(+). N132 and R163 together coordinate substrate. H188 (proton acceptor) is an active-site residue.

The protein belongs to the LDH/MDH superfamily. MDH type 2 family.

It carries out the reaction (S)-malate + NAD(+) = oxaloacetate + NADH + H(+). Functionally, catalyzes the reversible oxidation of malate to oxaloacetate. The chain is Malate dehydrogenase from Cupriavidus pinatubonensis (strain JMP 134 / LMG 1197) (Cupriavidus necator (strain JMP 134)).